The following is a 78-amino-acid chain: Large ribosomal subunit protein uL29 (78 aa).

The protein belongs to the universal ribosomal protein uL29 family.

The chain is Large ribosomal subunit protein uL29 from Salinispora arenicola (strain CNS-205).